Reading from the N-terminus, the 78-residue chain is Delta-conotoxin-like Ai6.1 (78 aa).

Residues Met1 to Ala22 form the signal peptide. Residues Asp23 to Asn49 constitute a propeptide that is removed on maturation. 3 disulfides stabilise this stretch: Cys53/Cys68, Cys60/Cys72, and Cys67/Cys77.

It belongs to the conotoxin O1 superfamily. Expressed by the venom duct.

The protein localises to the secreted. In terms of biological role, delta-conotoxins bind to site 6 of voltage-gated sodium channels (Nav) and inhibit the inactivation process. The chain is Delta-conotoxin-like Ai6.1 from Conus ammiralis (Admiral cone).